Reading from the N-terminus, the 382-residue chain is GDP-mannose transporter (382 aa).

The Cytoplasmic portion of the chain corresponds to 1–40 (MADDKKTNEYTIEMDKLDHGNKDFEAPAPAVRPRGPPVAQ). Residues 41-61 (LANNPILPVLAYCGSSILMTV) traverse the membrane as a helical segment. The Lumenal portion of the chain corresponds to 62 to 71 (MNKYVLSGRD). A helical membrane pass occupies residues 72 to 92 (FNLNFFLLCVQSIVCIVAIQT). Over 93–110 (CKVSKLITYRDFNSDEAK) the chain is Cytoplasmic. The helical transmembrane segment at 111-127 (KWFPITLLLIGMIYTGS) threads the bilayer. Over 128 to 134 (KALQYLS) the chain is Lumenal. A helical transmembrane segment spans residues 135-151 (IPVYTIFKNLTIILIAY). The Cytoplasmic segment spans residues 152-160 (GEVLWFGGS). The chain crosses the membrane as a helical span at residues 161–182 (VTGLTLFSFGLMVLSSIIAAWA). Residues 183 to 200 (DIKHAVESSGDATAKVST) lie on the Lumenal side of the membrane. A helical transmembrane segment spans residues 201 to 221 (LNAGYIWMLINCLCTSSYVLG). Residues 222–233 (MRKRIKLTNFKD) are Cytoplasmic-facing. The helical transmembrane segment at 234–254 (FDTMFYNNLLSIPVLLVLTFL) threads the bilayer. Residues 255–274 (MEDWSSANIARNFPSTDRNG) lie on the Lumenal side of the membrane. The helical transmembrane segment at 275-295 (ILFAMILSGLSSVFISYTSAW) threads the bilayer. The Cytoplasmic segment spans residues 296–303 (CVRVTSST). A helical membrane pass occupies residues 304–324 (TYSMVGALNKLPIALSGLIFF). Residues 325–327 (DAP) lie on the Lumenal side of the membrane. A helical membrane pass occupies residues 328-348 (VTFPSVSAIVVGFISGIVYAV). At 349 to 382 (AKIKQSAKPKTGVLPMSNPPVSASSQSMRDSLRS) the chain is on the cytoplasmic side. A disordered region spans residues 358–382 (KTGVLPMSNPPVSASSQSMRDSLRS). The span at 367–382 (PPVSASSQSMRDSLRS) shows a compositional bias: polar residues.

The protein belongs to the TPT transporter family. SLC35D subfamily. Homooligomer.

The protein localises to the golgi apparatus membrane. Its subcellular location is the cytoplasmic vesicle membrane. It is found in the endoplasmic reticulum membrane. In terms of biological role, involved in the import of GDP-mannose from the cytoplasm into the Golgi lumen. This Aspergillus fumigatus (strain CBS 144.89 / FGSC A1163 / CEA10) (Neosartorya fumigata) protein is GDP-mannose transporter (gmt1).